Reading from the N-terminus, the 243-residue chain is Carboxy-S-adenosyl-L-methionine synthase (243 aa).

S-adenosyl-L-methionine contacts are provided by residues Y35, 68-70 (GCS), 92-93 (DN), and R199.

This sequence belongs to the class I-like SAM-binding methyltransferase superfamily. Cx-SAM synthase family. As to quaternary structure, homodimer.

It carries out the reaction prephenate + S-adenosyl-L-methionine = carboxy-S-adenosyl-L-methionine + 3-phenylpyruvate + H2O. In terms of biological role, catalyzes the conversion of S-adenosyl-L-methionine (SAM) to carboxy-S-adenosyl-L-methionine (Cx-SAM). In Helicobacter pylori (strain J99 / ATCC 700824) (Campylobacter pylori J99), this protein is Carboxy-S-adenosyl-L-methionine synthase.